Reading from the N-terminus, the 343-residue chain is Ribosomal RNA small subunit methyltransferase C (343 aa).

The protein belongs to the methyltransferase superfamily. RsmC family. As to quaternary structure, monomer.

It localises to the cytoplasm. The catalysed reaction is guanosine(1207) in 16S rRNA + S-adenosyl-L-methionine = N(2)-methylguanosine(1207) in 16S rRNA + S-adenosyl-L-homocysteine + H(+). In terms of biological role, specifically methylates the guanine in position 1207 of 16S rRNA in the 30S particle. This chain is Ribosomal RNA small subunit methyltransferase C, found in Shigella sonnei (strain Ss046).